A 160-amino-acid polypeptide reads, in one-letter code: Cyclic pyranopterin monophosphate synthase (160 aa).

Substrate contacts are provided by residues 74-76 (LSH) and 112-113 (ME). Aspartate 127 is an active-site residue.

It belongs to the MoaC family. Homohexamer; trimer of dimers.

The enzyme catalyses (8S)-3',8-cyclo-7,8-dihydroguanosine 5'-triphosphate = cyclic pyranopterin phosphate + diphosphate. Its pathway is cofactor biosynthesis; molybdopterin biosynthesis. Functionally, catalyzes the conversion of (8S)-3',8-cyclo-7,8-dihydroguanosine 5'-triphosphate to cyclic pyranopterin monophosphate (cPMP). In Pelobacter propionicus (strain DSM 2379 / NBRC 103807 / OttBd1), this protein is Cyclic pyranopterin monophosphate synthase.